We begin with the raw amino-acid sequence, 369 residues long: UDP-N-acetylglucosamine--N-acetylmuramyl-(pentapeptide) pyrophosphoryl-undecaprenol N-acetylglucosamine transferase (369 aa).

Residues threonine 10–glycine 12, asparagine 124, arginine 166, serine 196, and glutamine 300 contribute to the UDP-N-acetyl-alpha-D-glucosamine site.

The protein belongs to the glycosyltransferase 28 family. MurG subfamily.

Its subcellular location is the cell membrane. The catalysed reaction is di-trans,octa-cis-undecaprenyl diphospho-N-acetyl-alpha-D-muramoyl-L-alanyl-D-glutamyl-meso-2,6-diaminopimeloyl-D-alanyl-D-alanine + UDP-N-acetyl-alpha-D-glucosamine = di-trans,octa-cis-undecaprenyl diphospho-[N-acetyl-alpha-D-glucosaminyl-(1-&gt;4)]-N-acetyl-alpha-D-muramoyl-L-alanyl-D-glutamyl-meso-2,6-diaminopimeloyl-D-alanyl-D-alanine + UDP + H(+). It functions in the pathway cell wall biogenesis; peptidoglycan biosynthesis. Cell wall formation. Catalyzes the transfer of a GlcNAc subunit on undecaprenyl-pyrophosphoryl-MurNAc-pentapeptide (lipid intermediate I) to form undecaprenyl-pyrophosphoryl-MurNAc-(pentapeptide)GlcNAc (lipid intermediate II). In Desulfitobacterium hafniense (strain Y51), this protein is UDP-N-acetylglucosamine--N-acetylmuramyl-(pentapeptide) pyrophosphoryl-undecaprenol N-acetylglucosamine transferase.